A 182-amino-acid chain; its full sequence is UPF0316 protein BCAH820_3389 (182 aa).

A run of 3 helical transmembrane segments spans residues 6–26 (LIFV…ILLV), 32–52 (SAAA…GIVF), and 58–78 (WMNI…GGYI).

It belongs to the UPF0316 family.

It localises to the cell membrane. This is UPF0316 protein BCAH820_3389 from Bacillus cereus (strain AH820).